The primary structure comprises 223 residues: Ribosomal RNA small subunit methyltransferase G (223 aa).

Residues Gly-82, Leu-87, 133 to 134 (AE), and Arg-151 contribute to the S-adenosyl-L-methionine site.

This sequence belongs to the methyltransferase superfamily. RNA methyltransferase RsmG family.

The protein resides in the cytoplasm. Functionally, specifically methylates the N7 position of guanine in position 518 of 16S rRNA. This is Ribosomal RNA small subunit methyltransferase G from Corynebacterium glutamicum (strain R).